A 125-amino-acid polypeptide reads, in one-letter code: Large ribosomal subunit protein uL22 (125 aa).

Belongs to the universal ribosomal protein uL22 family. In terms of assembly, part of the 50S ribosomal subunit.

Its function is as follows. This protein binds specifically to 23S rRNA; its binding is stimulated by other ribosomal proteins, e.g. L4, L17, and L20. It is important during the early stages of 50S assembly. It makes multiple contacts with different domains of the 23S rRNA in the assembled 50S subunit and ribosome. The globular domain of the protein is located near the polypeptide exit tunnel on the outside of the subunit, while an extended beta-hairpin is found that lines the wall of the exit tunnel in the center of the 70S ribosome. The polypeptide is Large ribosomal subunit protein uL22 (Acetivibrio thermocellus (strain ATCC 27405 / DSM 1237 / JCM 9322 / NBRC 103400 / NCIMB 10682 / NRRL B-4536 / VPI 7372) (Clostridium thermocellum)).